A 78-amino-acid chain; its full sequence is Dermaseptin-B1 (78 aa).

A signal peptide spans 1-22 (MDILKKSLFLVLFLGLVSLSIC). The propeptide occupies 23–42 (EEEKRENEDEEKQDDEQSEM). Gln-75 carries the post-translational modification Glutamine amide. Residues 76–78 (GEQ) constitute a propeptide that is removed on maturation.

The protein belongs to the frog skin active peptide (FSAP) family. Dermaseptin subfamily. In terms of tissue distribution, expressed by the skin glands.

The protein resides in the secreted. Functionally, possesses a potent antimicrobial activity against bacteria, fungi and protozoa. Probably acts by disturbing membrane functions with its amphipathic structure. The sequence is that of Dermaseptin-B1 from Phyllomedusa bicolor (Two-colored leaf frog).